A 528-amino-acid chain; its full sequence is GMP synthase [glutamine-hydrolyzing] (528 aa).

The Glutamine amidotransferase type-1 domain maps to 13–204; it reads AIVILDFGSQ…VYDICSCEPD (192 aa). Cys90 acts as the Nucleophile in catalysis. Catalysis depends on residues His178 and Glu180. The 199-residue stretch at 205-403 folds into the GMPS ATP-PPase domain; the sequence is WTTNLFIDEA…LGLPDEIVRR (199 aa). Residue 232–238 participates in ATP binding; it reads SGGVDSS.

Homodimer.

It catalyses the reaction XMP + L-glutamine + ATP + H2O = GMP + L-glutamate + AMP + diphosphate + 2 H(+). Its pathway is purine metabolism; GMP biosynthesis; GMP from XMP (L-Gln route): step 1/1. Catalyzes the synthesis of GMP from XMP. The polypeptide is GMP synthase [glutamine-hydrolyzing] (Prochlorococcus marinus (strain NATL2A)).